A 658-amino-acid polypeptide reads, in one-letter code: DNA mismatch repair protein MutL (658 aa).

Residues 114–130 show a composition bias toward basic and acidic residues; that stretch reads RQEDSSHATQVKAEDGK. Disordered stretches follow at residues 114 to 137, 369 to 401, and 438 to 457; these read RQED…PTAA, DYPT…APQQ, and FGNM…LSDG.

It belongs to the DNA mismatch repair MutL/HexB family.

Functionally, this protein is involved in the repair of mismatches in DNA. It is required for dam-dependent methyl-directed DNA mismatch repair. May act as a 'molecular matchmaker', a protein that promotes the formation of a stable complex between two or more DNA-binding proteins in an ATP-dependent manner without itself being part of a final effector complex. This Neisseria meningitidis serogroup A / serotype 4A (strain DSM 15465 / Z2491) protein is DNA mismatch repair protein MutL.